The sequence spans 104 residues: Large ribosomal subunit protein uL24 (104 aa).

Belongs to the universal ribosomal protein uL24 family. As to quaternary structure, part of the 50S ribosomal subunit.

One of two assembly initiator proteins, it binds directly to the 5'-end of the 23S rRNA, where it nucleates assembly of the 50S subunit. Functionally, one of the proteins that surrounds the polypeptide exit tunnel on the outside of the subunit. The sequence is that of Large ribosomal subunit protein uL24 from Shigella dysenteriae serotype 1 (strain Sd197).